We begin with the raw amino-acid sequence, 391 residues long: 8-amino-7-oxononanoate synthase (391 aa).

Arg19 is a substrate binding site. 106-107 serves as a coordination point for pyridoxal 5'-phosphate; the sequence is GY. Residue His131 coordinates substrate. Residues Ser178, His206, and Thr234 each contribute to the pyridoxal 5'-phosphate site. Position 237 is an N6-(pyridoxal phosphate)lysine (Lys237). Thr353 provides a ligand contact to substrate.

Belongs to the class-II pyridoxal-phosphate-dependent aminotransferase family. BioF subfamily. As to quaternary structure, homodimer. Pyridoxal 5'-phosphate serves as cofactor.

It catalyses the reaction 6-carboxyhexanoyl-[ACP] + L-alanine + H(+) = (8S)-8-amino-7-oxononanoate + holo-[ACP] + CO2. Its pathway is cofactor biosynthesis; biotin biosynthesis. In terms of biological role, catalyzes the decarboxylative condensation of pimeloyl-[acyl-carrier protein] and L-alanine to produce 8-amino-7-oxononanoate (AON), [acyl-carrier protein], and carbon dioxide. In Pelobacter propionicus (strain DSM 2379 / NBRC 103807 / OttBd1), this protein is 8-amino-7-oxononanoate synthase.